A 29-amino-acid polypeptide reads, in one-letter code: Cytochrome b6-f complex subunit 8 (29 aa).

Residues 3 to 23 form a helical membrane-spanning segment; it reads IVSIAWAALMVVFTFSLSLVV.

Belongs to the PetN family. In terms of assembly, the 4 large subunits of the cytochrome b6-f complex are cytochrome b6, subunit IV (17 kDa polypeptide, PetD), cytochrome f and the Rieske protein, while the 4 small subunits are PetG, PetL, PetM and PetN. The complex functions as a dimer.

The protein resides in the plastid. It is found in the chloroplast thylakoid membrane. Functionally, component of the cytochrome b6-f complex, which mediates electron transfer between photosystem II (PSII) and photosystem I (PSI), cyclic electron flow around PSI, and state transitions. This is Cytochrome b6-f complex subunit 8 from Angiopteris evecta (Mule's foot fern).